The sequence spans 822 residues: Stemar-13-ene synthase (822 aa).

The span at 1-10 shows a compositional bias: polar residues; sequence MMLLSSSYSG. The interval 1–29 is disordered; it reads MMLLSSSYSGGQFPGVSPLGTRPKRSTTV. Positions 553, 557, 698, 702, and 706 each coordinate Mg(2+). The DDXXD motif motif lies at 553-557; it reads DDLFD.

It belongs to the terpene synthase family. Mg(2+) is required as a cofactor.

It catalyses the reaction 9alpha-copalyl diphosphate = stemar-13-ene + diphosphate. In terms of biological role, catalyzes the conversion of syn-copalyl diphosphate to the phytoalexin precursor stemarene. In Oryza sativa subsp. japonica (Rice), this protein is Stemar-13-ene synthase (KSL8).